A 341-amino-acid polypeptide reads, in one-letter code: Biotin synthase (341 aa).

In terms of domain architecture, Radical SAM core spans 40-264 (NSVKLNYLVN…VAPRSELRIA (225 aa)). Residues C55, C59, and C62 each coordinate [4Fe-4S] cluster. [2Fe-2S] cluster-binding residues include C99, C132, C192, and R262. A disordered region spans residues 317–341 (ASAPQGGVEPVLRKRGAGTELQPNA).

It belongs to the radical SAM superfamily. Biotin synthase family. As to quaternary structure, homodimer. Requires [4Fe-4S] cluster as cofactor. It depends on [2Fe-2S] cluster as a cofactor.

It catalyses the reaction (4R,5S)-dethiobiotin + (sulfur carrier)-SH + 2 reduced [2Fe-2S]-[ferredoxin] + 2 S-adenosyl-L-methionine = (sulfur carrier)-H + biotin + 2 5'-deoxyadenosine + 2 L-methionine + 2 oxidized [2Fe-2S]-[ferredoxin]. It functions in the pathway cofactor biosynthesis; biotin biosynthesis; biotin from 7,8-diaminononanoate: step 2/2. Its function is as follows. Catalyzes the conversion of dethiobiotin (DTB) to biotin by the insertion of a sulfur atom into dethiobiotin via a radical-based mechanism. The protein is Biotin synthase of Renibacterium salmoninarum (strain ATCC 33209 / DSM 20767 / JCM 11484 / NBRC 15589 / NCIMB 2235).